The chain runs to 132 residues: MAGRGKTLGSGSAKKATTRSSKAGLQFPVGRIARFLKKGKYAERVGAGAPVYLAAVLEYLAAEVLELAGNAARDNKKTRIVPRHIQLAVRNDEELSKLLGDVTIANGGVMPNIHNLLLPKKTGASKPSAEDD.

The disordered stretch occupies residues 1–22 (MAGRGKTLGSGSAKKATTRSSK).

Belongs to the histone H2A family. As to quaternary structure, the nucleosome is a histone octamer containing two molecules each of H2A, H2B, H3 and H4 assembled in one H3-H4 heterotetramer and two H2A-H2B heterodimers. The octamer wraps approximately 147 bp of DNA. In terms of processing, not ubiquitinated. In terms of tissue distribution, low level of expression; mainly in roots. Found in the root cap cells and in non dividing tissues of the plant, including the root elongation and maturation zones and the leaf veins.

It localises to the nucleus. Its subcellular location is the chromosome. In terms of biological role, core component of nucleosome. Nucleosomes wrap and compact DNA into chromatin, limiting DNA accessibility to the cellular machineries which require DNA as a template. Histones thereby play a central role in transcription regulation, DNA repair, DNA replication and chromosomal stability. DNA accessibility is regulated via a complex set of post-translational modifications of histones, also called histone code, and nucleosome remodeling. In Arabidopsis thaliana (Mouse-ear cress), this protein is Probable histone H2A.1.